A 299-amino-acid polypeptide reads, in one-letter code: Recombination-associated protein RdgC (299 aa).

Belongs to the RdgC family.

It localises to the cytoplasm. The protein resides in the nucleoid. May be involved in recombination. The polypeptide is Recombination-associated protein RdgC (Cupriavidus necator (strain ATCC 17699 / DSM 428 / KCTC 22496 / NCIMB 10442 / H16 / Stanier 337) (Ralstonia eutropha)).